Here is a 258-residue protein sequence, read N- to C-terminus: ADP-dependent (S)-NAD(P)H-hydrate dehydratase (258 aa).

The 258-residue stretch at 1-258 (MGRLQRTLSN…VIECIPKTIR (258 aa)) folds into the YjeF C-terminal domain. Gly201 contributes to the AMP binding site. Asp202 contributes to the (6S)-NADPHX binding site.

This sequence belongs to the NnrD/CARKD family. As to quaternary structure, homotetramer. Requires Mg(2+) as cofactor.

It carries out the reaction (6S)-NADHX + ADP = AMP + phosphate + NADH + H(+). The catalysed reaction is (6S)-NADPHX + ADP = AMP + phosphate + NADPH + H(+). Its function is as follows. Catalyzes the dehydration of the S-form of NAD(P)HX at the expense of ADP, which is converted to AMP. Together with NAD(P)HX epimerase, which catalyzes the epimerization of the S- and R-forms, the enzyme allows the repair of both epimers of NAD(P)HX, a damaged form of NAD(P)H that is a result of enzymatic or heat-dependent hydration. This chain is ADP-dependent (S)-NAD(P)H-hydrate dehydratase, found in Natrialba magadii (strain ATCC 43099 / DSM 3394 / CCM 3739 / CIP 104546 / IAM 13178 / JCM 8861 / NBRC 102185 / NCIMB 2190 / MS3) (Natronobacterium magadii).